Here is a 403-residue protein sequence, read N- to C-terminus: Peroxisomal membrane protein PEX13 (403 aa).

Residues 1 to 11 are compositionally biased toward pro residues; it reads MASQPPPPPKP. Residues 1-69 form a disordered region; that stretch reads MASQPPPPPK…SQQTGGNNVN (69 aa). Residues 1 to 134 lie on the Peroxisomal matrix side of the membrane; that stretch reads MASQPPPPPK…SSRGAFQSIE (134 aa). Polar residues predominate over residues 59 to 69; that stretch reads PSQQTGGNNVN. A helical transmembrane segment spans residues 135–155; sequence SIVHAFASVSMMMDATFSAVY. The interval 145–233 is targeting to peroxisomes; sequence MMMDATFSAV…EDQANNSAKS (89 aa). At 156–174 the chain is on the cytoplasmic side; it reads NSFRAVLDVANHFSRLKIH. A helical membrane pass occupies residues 175–192; it reads FTKVFSAFALVRTIRYLY. Residues 175–196 form an interaction with PEX19 region; it reads FTKVFSAFALVRTIRYLYRRLQ. Residues 193 to 233 lie on the Peroxisomal matrix side of the membrane; the sequence is RRLQWMMGLRRGSENEDLWAESEGTVACLGAEDQANNSAKS. A helical transmembrane segment spans residues 234-254; that stretch reads WPIFLFFAVILGGPYLIWKLL. Topologically, residues 255–403 are cytoplasmic; the sequence is STHSDEVTDS…TGKNGDKQDL (149 aa). Positions 272 to 336 constitute an SH3 domain; that stretch reads DDHVVARAEY…PANYVKILGK (65 aa). 2 disordered regions span residues 341–364 and 381–403; these read KTVESSTMPKQQQSFTNPTSVKGV and FVETNKVAGTPDSTGKNGDKQDL. Positions 344 to 364 are enriched in polar residues; sequence ESSTMPKQQQSFTNPTSVKGV.

It belongs to the peroxin-13 family. Interacts (via SH3 domain) with PEX14 (via SH3-binding motif); forming the PEX13-PEX14 docking complex. Interacts with PEX19.

It localises to the peroxisome membrane. Its function is as follows. Component of the PEX13-PEX14 docking complex, a translocon channel that specifically mediates the import of peroxisomal cargo proteins bound to PEX5 receptor. The PEX13-PEX14 docking complex forms a large import pore which can be opened to a diameter of about 9 nm. Mechanistically, PEX5 receptor along with cargo proteins associates with the PEX14 subunit of the PEX13-PEX14 docking complex in the cytosol, leading to the insertion of the receptor into the organelle membrane with the concomitant translocation of the cargo into the peroxisome matrix. Involved in the import of PTS1- and PTS2-type containing proteins. This Rattus norvegicus (Rat) protein is Peroxisomal membrane protein PEX13.